The sequence spans 985 residues: Regulator of telomere elongation helicase 1 homolog (985 aa).

One can recognise a Helicase ATP-binding domain in the interval 7 to 303; that stretch reads AGIPVHFPFE…QDMAGDEPKD (297 aa). ATP is bound at residue 42–49; that stretch reads SPTGTGKT. Positions 146, 164, 173, and 209 each coordinate [4Fe-4S] cluster. Positions 252-255 match the DEAH box motif; the sequence is DEAH. Threonine 874 is modified (phosphothreonine).

Belongs to the helicase family. RAD3/XPD subfamily.

It localises to the nucleus. The enzyme catalyses ATP + H2O = ADP + phosphate + H(+). A probable ATP-dependent DNA helicase implicated in DNA repair and the maintenance of genomic stability. Acts as an anti-recombinase to counteract toxic recombination and limit crossover during meiosis. Regulates meiotic recombination and crossover homeostasis by physically dissociating strand invasion events and thereby promotes noncrossover repair by meiotic synthesis dependent strand annealing (SDSA) as well as disassembly of D loop recombination intermediates. The protein is Regulator of telomere elongation helicase 1 homolog of Drosophila erecta (Fruit fly).